The chain runs to 191 residues: UMP-CMP kinase 2 (191 aa).

ATP is bound at residue 12–17; it reads GSGKGT. Residues 32–62 are NMP; that stretch reads SAGDLLRAERQREGSEFGALIESHIKNGSIV. A ribonucleoside 5'-phosphate contacts are provided by residues Arg38, 60–62, and 88–91; these read SIV and GFPR. Asn95 contacts CMP. The segment at 128–136 is LID; that stretch reads NRGQGRTDD. Arg129 is an ATP binding site. Positions 133 and 144 each coordinate a ribonucleoside 5'-phosphate. Arg172 contributes to the ATP binding site.

This sequence belongs to the adenylate kinase family. UMP-CMP kinase subfamily. In terms of assembly, monomer. The cofactor is Mg(2+). As to expression, expressed in neurons and the pharynx.

Its subcellular location is the cytoplasm. The protein localises to the nucleus. It carries out the reaction CMP + ATP = CDP + ADP. The catalysed reaction is dCMP + ATP = dCDP + ADP. The enzyme catalyses UMP + ATP = UDP + ADP. Catalyzes the phosphorylation of pyrimidine nucleoside monophosphates at the expense of ATP. Plays an important role in de novo pyrimidine nucleotide biosynthesis. Has preference for UMP and CMP as phosphate acceptors. The sequence is that of UMP-CMP kinase 2 from Caenorhabditis elegans.